The primary structure comprises 630 residues: MDPNFSESLNGFEYFDGNPNLLTDPMEDQYPPPSDTLLKYVSEILMEESNGDYKQSMFYDSLALRKTEEMLQQVITDSQNQSFSPADSLITNSWDASGSIDESAYSADPQPVNEIMVKSMFSDAESALQFKKGVEEASKFLPNSDQWVINLDIERSERRDSVKEEMGLDQLRVKKNHERDFEEVRSSKQFASNVEDSKVTDMFDKVLLLDGECDPQTLLDSEIQAIRSSKNIGEKGKKKKKKKSQVVDFRTLLTHCAQAISTGDKTTALEFLLQIRQQSSPLGDAGQRLAHCFANALEARLQGSTGPMIQTYYNALTSSLKDTAADTIRAYRVYLSSSPFVTLMYFFSIWMILDVAKDAPVLHIVDFGILYGFQWPMFIQSISDRKDVPRKLRITGIELPQCGFRPAERIEETGRRLAEYCKRFNVPFEYKAIASQNWETIRIEDLDIRPNEVLAVNAGLRLKNLQDETGSEENCPRDAVLKLIRNMNPDVFIHAIVNGSFNAPFFISRFKEAVYHYSALFDMFDSTLPRDNKERIRFEREFYGREAMNVIACEEADRVERPETYRQWQVRMVRAGFKQKTIKPELVELFRGKLKKWRYHKDFVVDENSKWLLQGWKGRTLYASSCWVPA.

Residues 240–628 enclose the GRAS domain; sequence KKKKSQVVDF…RTLYASSCWV (389 aa). The interval 247-312 is leucine repeat I (LRI); sequence VDFRTLLTHC…GSTGPMIQTY (66 aa). Residues 331-396 form a VHIID region; it reads YRVYLSSSPF…DVPRKLRITG (66 aa). The VHIID signature appears at 362–366; the sequence is LHIVD. Residues 412–444 are leucine repeat II (LRII); it reads ETGRRLAEYCKRFNVPFEYKAIASQNWETIRIE. A PFYRE region spans residues 454-549; sequence LAVNAGLRLK…REFYGREAMN (96 aa). The segment at 552-628 is SAW; sequence ACEEADRVER…RTLYASSCWV (77 aa).

This sequence belongs to the GRAS family.

The protein resides in the nucleus. Probable transcription factor involved in plant development. In Arabidopsis thaliana (Mouse-ear cress), this protein is Scarecrow-like protein 34 (SCL34).